We begin with the raw amino-acid sequence, 224 residues long: tRNA (guanine-N(7)-)-methyltransferase (224 aa).

4 residues coordinate S-adenosyl-L-methionine: Glu45, Glu70, Asp97, and Asp119. Residue Asp119 is part of the active site. Substrate contacts are provided by residues Lys123, Asp155, and 199–202 (TEYE).

It belongs to the class I-like SAM-binding methyltransferase superfamily. TrmB family.

It catalyses the reaction guanosine(46) in tRNA + S-adenosyl-L-methionine = N(7)-methylguanosine(46) in tRNA + S-adenosyl-L-homocysteine. It participates in tRNA modification; N(7)-methylguanine-tRNA biosynthesis. In terms of biological role, catalyzes the formation of N(7)-methylguanine at position 46 (m7G46) in tRNA. The chain is tRNA (guanine-N(7)-)-methyltransferase from Ureaplasma urealyticum serovar 10 (strain ATCC 33699 / Western).